The following is a 350-amino-acid chain: Dihydroorotase (350 aa).

Zn(2+) is bound by residues histidine 13 and histidine 15. Residues 15 to 17 (HLR) and asparagine 41 each bind substrate. Residues lysine 99, histidine 136, and histidine 174 each coordinate Zn(2+). N6-carboxylysine is present on lysine 99. A substrate-binding site is contributed by histidine 136. Leucine 219 serves as a coordination point for substrate. Zn(2+) is bound at residue aspartate 247. Residue aspartate 247 is part of the active site. Residues histidine 251 and alanine 263 each coordinate substrate.

It belongs to the metallo-dependent hydrolases superfamily. DHOase family. Class II DHOase subfamily. Homodimer. The cofactor is Zn(2+).

It carries out the reaction (S)-dihydroorotate + H2O = N-carbamoyl-L-aspartate + H(+). Its pathway is pyrimidine metabolism; UMP biosynthesis via de novo pathway; (S)-dihydroorotate from bicarbonate: step 3/3. Functionally, catalyzes the reversible cyclization of carbamoyl aspartate to dihydroorotate. This is Dihydroorotase from Allorhizobium ampelinum (strain ATCC BAA-846 / DSM 112012 / S4) (Agrobacterium vitis (strain S4)).